The chain runs to 232 residues: MYEAVCAHPDGDSTVARLAATAASAGYDGIVVRNWGATSADPDAVGADTDADVVRGTTVSVTDRAGASERIRRRRENAVVVAARASSPSLNRFVAESERVDVLAAPMADGGDVNHVIVKAARTHGVRLEFDFAGVLRASGGDRVQALRGLRKLRELVEHYDAPFVVSGRPASHLHVRSPRELVAVGAEIGFTDAQVRAGLREWTHLAARNRRRLSAEFIAPGVKRGRYEEDP.

It belongs to the eukaryotic/archaeal RNase P protein component 3 family. As to quaternary structure, consists of a catalytic RNA component and at least 4-5 protein subunits.

It is found in the cytoplasm. It carries out the reaction Endonucleolytic cleavage of RNA, removing 5'-extranucleotides from tRNA precursor.. Part of ribonuclease P, a protein complex that generates mature tRNA molecules by cleaving their 5'-ends. The protein is Ribonuclease P protein component 3 of Halobacterium salinarum (strain ATCC 29341 / DSM 671 / R1).